Reading from the N-terminus, the 310-residue chain is D-alanine--D-alanine ligase (310 aa).

One can recognise an ATP-grasp domain in the interval 107-302 (KQAFQAARLT…FEDLVERILA (196 aa)). 135–188 (EFSLPVVVKPSQEGSSVGVSIVKKESEFAAAMKEAFRYDREILVEQFIKGSEVQ) serves as a coordination point for ATP. Residues Asp256, Glu269, and Asn271 each coordinate Mg(2+).

Belongs to the D-alanine--D-alanine ligase family. It depends on Mg(2+) as a cofactor. Requires Mn(2+) as cofactor.

It is found in the cytoplasm. It catalyses the reaction 2 D-alanine + ATP = D-alanyl-D-alanine + ADP + phosphate + H(+). The protein operates within cell wall biogenesis; peptidoglycan biosynthesis. Its function is as follows. Cell wall formation. The chain is D-alanine--D-alanine ligase from Geotalea uraniireducens (strain Rf4) (Geobacter uraniireducens).